We begin with the raw amino-acid sequence, 286 residues long: Prohibitin-6, mitochondrial (286 aa).

The Mitochondrial matrix segment spans residues 1 to 12; that stretch reads MNFKNVKVPKGP. The helical; Signal-anchor for type II membrane protein transmembrane segment at 13 to 35 threads the bilayer; the sequence is GGGVIAAVVIGGLSLYGATHTLY. At 36–286 the chain is on the mitochondrial intermembrane side; the sequence is NVDGGHRAIV…AMDLDVKPKK (251 aa).

This sequence belongs to the prohibitin family. In terms of assembly, component of a prohibitin multimeric complex in mitochondrial membranes. As to expression, mostly expressed in proliferative tissues, including vasculature, shoot and root apical tissues.

The protein localises to the mitochondrion inner membrane. In terms of biological role, prohibitin probably acts as a holdase/unfoldase for the stabilization of newly synthesized mitochondrial proteins. The protein is Prohibitin-6, mitochondrial (PHB6) of Arabidopsis thaliana (Mouse-ear cress).